Reading from the N-terminus, the 219-residue chain is MSPMQQRELFSSPPIDLLFFEQQALKQGHRVIAGIDEAGRGALCGPVVAAAVILPTGMAIPGVDDSKKLSPRTREQLFDEIMARALSVGIGIGTPQLIDRINILQATRHAMAEAVDILAPRPDMLLIDGISTIDVPLPQKTITKGDSRSLTIAAASIIAKVSRDRMLTELDLLHPGYGFASHKGYGCASHMEAIRRLGPSPVHRLTFRGVREHVTCPSS.

An RNase H type-2 domain is found at 30 to 219; it reads RVIAGIDEAG…VREHVTCPSS (190 aa). A divalent metal cation is bound by residues Asp36, Glu37, and Asp128.

It belongs to the RNase HII family. Mn(2+) serves as cofactor. Requires Mg(2+) as cofactor.

It is found in the cytoplasm. The catalysed reaction is Endonucleolytic cleavage to 5'-phosphomonoester.. Its function is as follows. Endonuclease that specifically degrades the RNA of RNA-DNA hybrids. The chain is Ribonuclease HII from Pelobacter propionicus (strain DSM 2379 / NBRC 103807 / OttBd1).